Here is a 270-residue protein sequence, read N- to C-terminus: Undecaprenyl-diphosphatase 1 (270 aa).

The next 6 helical transmembrane spans lie at 79–99 (NLLL…LLFS), 105–125 (VLFN…IILW), 155–175 (LALI…LFLG), 182–202 (TEFS…YSLI), 215–235 (VFAV…RALL), and 242–262 (SFAV…GTWW).

This sequence belongs to the UppP family.

The protein resides in the cell inner membrane. It catalyses the reaction di-trans,octa-cis-undecaprenyl diphosphate + H2O = di-trans,octa-cis-undecaprenyl phosphate + phosphate + H(+). Catalyzes the dephosphorylation of undecaprenyl diphosphate (UPP). Confers resistance to bacitracin. The chain is Undecaprenyl-diphosphatase 1 from Chromobacterium violaceum (strain ATCC 12472 / DSM 30191 / JCM 1249 / CCUG 213 / NBRC 12614 / NCIMB 9131 / NCTC 9757 / MK).